The sequence spans 145 residues: Beta sliding clamp (145 aa).

The protein belongs to the beta sliding clamp family. In terms of assembly, forms a ring-shaped head-to-tail homodimer around DNA which binds and tethers DNA polymerases and other proteins to the DNA. The DNA replisome complex has a single clamp-loading complex (3 tau and 1 each of delta, delta', psi and chi subunits) which binds 3 Pol III cores (1 core on the leading strand and 2 on the lagging strand) each with a beta sliding clamp dimer. Additional proteins in the replisome are other copies of gamma, psi and chi, Ssb, DNA helicase and RNA primase.

Its subcellular location is the cytoplasm. Confers DNA tethering and processivity to DNA polymerases and other proteins. Acts as a clamp, forming a ring around DNA (a reaction catalyzed by the clamp-loading complex) which diffuses in an ATP-independent manner freely and bidirectionally along dsDNA. Initially characterized for its ability to contact the catalytic subunit of DNA polymerase III (Pol III), a complex, multichain enzyme responsible for most of the replicative synthesis in bacteria; Pol III exhibits 3'-5' exonuclease proofreading activity. The beta chain is required for initiation of replication as well as for processivity of DNA replication. This chain is Beta sliding clamp (dnaN), found in Vibrio harveyi (Beneckea harveyi).